The primary structure comprises 456 residues: tRNA modification GTPase MnmE (456 aa).

(6S)-5-formyl-5,6,7,8-tetrahydrofolate contacts are provided by Arg-24, Glu-81, and Lys-120. One can recognise a TrmE-type G domain in the interval 216-379; the sequence is GMKVVIAGRP…LREHLKECIG (164 aa). Asn-226 lines the K(+) pocket. GTP is bound by residues 226 to 231, 245 to 251, and 270 to 273; these read NAGKSS, TAIEGTT, and DTAG. Ser-230 is a Mg(2+) binding site. Residues Thr-245, Ile-247, and Thr-250 each contribute to the K(+) site. Thr-251 lines the Mg(2+) pocket. Lys-456 is a binding site for (6S)-5-formyl-5,6,7,8-tetrahydrofolate.

The protein belongs to the TRAFAC class TrmE-Era-EngA-EngB-Septin-like GTPase superfamily. TrmE GTPase family. Homodimer. Heterotetramer of two MnmE and two MnmG subunits. K(+) serves as cofactor.

The protein localises to the cytoplasm. Exhibits a very high intrinsic GTPase hydrolysis rate. Involved in the addition of a carboxymethylaminomethyl (cmnm) group at the wobble position (U34) of certain tRNAs, forming tRNA-cmnm(5)s(2)U34. This Marinobacter nauticus (strain ATCC 700491 / DSM 11845 / VT8) (Marinobacter aquaeolei) protein is tRNA modification GTPase MnmE.